Reading from the N-terminus, the 389-residue chain is Chalcone synthase A (389 aa).

Cys-164 is an active-site residue.

Belongs to the thiolase-like superfamily. Chalcone/stilbene synthases family. As to expression, major expressed member of the gene family in various floral tissues and in seedlings treated with UV light. It is relatively low expressed in tissue culture material.

The enzyme catalyses (E)-4-coumaroyl-CoA + 3 malonyl-CoA + 3 H(+) = 2',4,4',6'-tetrahydroxychalcone + 3 CO2 + 4 CoA. It functions in the pathway secondary metabolite biosynthesis; flavonoid biosynthesis. Functionally, the primary product of this enzyme is 4,2',4',6'-tetrahydroxychalcone (also termed naringenin-chalcone or chalcone) which can under specific conditions spontaneously isomerize into naringenin. This chain is Chalcone synthase A (CHSA), found in Petunia hybrida (Petunia).